We begin with the raw amino-acid sequence, 418 residues long: Adenosylhomocysteinase (418 aa).

Substrate contacts are provided by T53, D125, and E150. Position 151–153 (151–153 (TTT)) interacts with NAD(+). 2 residues coordinate substrate: K180 and D184. Residues N185, 214–219 (GYGWCG), E237, N272, 293–295 (SGH), and N340 contribute to the NAD(+) site.

The protein belongs to the adenosylhomocysteinase family. The cofactor is NAD(+).

It is found in the cytoplasm. It catalyses the reaction S-adenosyl-L-homocysteine + H2O = L-homocysteine + adenosine. It functions in the pathway amino-acid biosynthesis; L-homocysteine biosynthesis; L-homocysteine from S-adenosyl-L-homocysteine: step 1/1. Its function is as follows. May play a key role in the regulation of the intracellular concentration of adenosylhomocysteine. This chain is Adenosylhomocysteinase, found in Aquifex aeolicus (strain VF5).